A 175-amino-acid chain; its full sequence is Large ribosomal subunit protein uL5 (175 aa).

It belongs to the universal ribosomal protein uL5 family. As to quaternary structure, part of the 50S ribosomal subunit; contacts the 5S rRNA and probably tRNA. Forms a bridge to the 30S subunit in the 70S ribosome.

Functionally, this is one of the proteins that bind and probably mediate the attachment of the 5S RNA into the large ribosomal subunit, where it forms part of the central protuberance. In the 70S ribosome it contacts protein S13 of the 30S subunit (bridge B1b), connecting the 2 subunits; this bridge is implicated in subunit movement. May contact the P site tRNA; the 5S rRNA and some of its associated proteins might help stabilize positioning of ribosome-bound tRNAs. This is Large ribosomal subunit protein uL5 from Halobacterium salinarum (strain ATCC 29341 / DSM 671 / R1).